The following is a 417-amino-acid chain: COP9 signalosome complex subunit 7a (417 aa).

The PCI domain occupies 2–179 (EQTKALNALE…EMVQINSVAA (178 aa)). The segment at 240–417 (DEQKGAVPSS…KRGSKRKLTA (178 aa)) is disordered. Gly residues predominate over residues 263-290 (RGGGGGGDGAGAGGSFRGSGYSRGGGLS). Composition is skewed to low complexity over residues 291–311 (QGYR…SRQQ), 320–330 (SNQSGTNSLLT), and 343–352 (PSAVSPSAAA). Gly residues predominate over residues 367–379 (METGSGSGSGPLG). The span at 385–405 (DMDDSEEDIDDDTMDLDDEGD) shows a compositional bias: acidic residues.

Belongs to the CSN7/EIF3M family. CSN7 subfamily. In terms of assembly, component of the COP9 signalosome (CSN) complex.

It is found in the cytoplasm. It localises to the nucleus. Its function is as follows. Component of the COP9 signalosome (CSN) complex that acts as an regulator of the ubiquitin (Ubl) conjugation pathway by mediating the deneddylation of the cullin subunit of SCF-type E3 ubiquitin-protein ligase complexes. The CSN complex is involved in the regulation of the circadian clock through its control of the stability of the SCF(FWD1) complex. This Neurospora crassa (strain ATCC 24698 / 74-OR23-1A / CBS 708.71 / DSM 1257 / FGSC 987) protein is COP9 signalosome complex subunit 7a (csn-7a).